The following is a 618-amino-acid chain: uncharacterized protein (618 aa).

A signal peptide spans 1-29 (MSFLVLPPEVNSALMFAGAGSGPTLAAAA). A disordered region spans residues 598-618 (SGDNSSGGFNAGNDQSGFFDG).

The protein belongs to the mycobacterial PPE family.

This is an uncharacterized protein from Mycobacterium tuberculosis (strain ATCC 25618 / H37Rv).